Here is a 538-residue protein sequence, read N- to C-terminus: Chaperonin GroEL 1 (538 aa).

Residues 30 to 33 (TLGP), Lys51, 87 to 91 (DGTTT), Gly415, 479 to 481 (NAA), and Asp495 contribute to the ATP site.

It belongs to the chaperonin (HSP60) family. In terms of assembly, forms a cylinder of 14 subunits composed of two heptameric rings stacked back-to-back. Interacts with the co-chaperonin GroES.

The protein localises to the cytoplasm. The catalysed reaction is ATP + H2O + a folded polypeptide = ADP + phosphate + an unfolded polypeptide.. Together with its co-chaperonin GroES, plays an essential role in assisting protein folding. The GroEL-GroES system forms a nano-cage that allows encapsulation of the non-native substrate proteins and provides a physical environment optimized to promote and accelerate protein folding. In Chromobacterium violaceum (strain ATCC 12472 / DSM 30191 / JCM 1249 / CCUG 213 / NBRC 12614 / NCIMB 9131 / NCTC 9757 / MK), this protein is Chaperonin GroEL 1.